We begin with the raw amino-acid sequence, 251 residues long: Octanoyltransferase (251 aa).

The BPL/LPL catalytic domain maps to 56–237 (ADTGDEIWVV…RLIANLDGES (182 aa)). Substrate-binding positions include 96 to 103 (RGGQITYH), 168 to 170 (ALG), and 181 to 183 (GLS). Residue C199 is the Acyl-thioester intermediate of the active site.

Belongs to the LipB family.

The protein resides in the cytoplasm. It catalyses the reaction octanoyl-[ACP] + L-lysyl-[protein] = N(6)-octanoyl-L-lysyl-[protein] + holo-[ACP] + H(+). It participates in protein modification; protein lipoylation via endogenous pathway; protein N(6)-(lipoyl)lysine from octanoyl-[acyl-carrier-protein]: step 1/2. Functionally, catalyzes the transfer of endogenously produced octanoic acid from octanoyl-acyl-carrier-protein onto the lipoyl domains of lipoate-dependent enzymes. Lipoyl-ACP can also act as a substrate although octanoyl-ACP is likely to be the physiological substrate. This Burkholderia ambifaria (strain MC40-6) protein is Octanoyltransferase.